Reading from the N-terminus, the 43-residue chain is Protein PsbN 1 (43 aa).

The chain crosses the membrane as a helical span at residues 3–23 (TATILGILIAAAVVGITVLAL).

It belongs to the PsbN family.

Its subcellular location is the cellular thylakoid membrane. Its function is as follows. May play a role in photosystem I and II biogenesis. The sequence is that of Protein PsbN 1 from Microcystis aeruginosa (strain NIES-843 / IAM M-2473).